An 885-amino-acid polypeptide reads, in one-letter code: GPI ethanolamine phosphate transferase 2 (885 aa).

3 N-linked (GlcNAc...) asparagine glycosylation sites follow: Asn82, Asn155, and Asn194. Residues 413–433 (DIYAGALILVITALAVIVVFN) traverse the membrane as a helical segment. N-linked (GlcNAc...) asparagine glycosylation is present at Asn443. The next 3 helical transmembrane spans lie at 447-467 (VMFY…SSLI), 473-493 (IWYF…FDTF), and 495-514 (SLQN…FMRS). Residue Asn516 is glycosylated (N-linked (GlcNAc...) asparagine). Helical transmembrane passes span 539-559 (LMWG…YIQG), 581-601 (GLIS…FKLL), 648-668 (IQLS…RVII), 697-717 (ENIP…KLIY), 726-746 (YILT…FCMG), 768-788 (VFLV…FWSL), 820-840 (ILLV…VNLV), and 865-885 (SWIL…VLLF).

The protein belongs to the PIGG/PIGN/PIGO family. PIGG subfamily.

It is found in the endoplasmic reticulum membrane. The protein operates within glycolipid biosynthesis; glycosylphosphatidylinositol-anchor biosynthesis. Its function is as follows. Ethanolamine phosphate transferase involved in glycosylphosphatidylinositol-anchor biosynthesis. Transfers ethanolamine phosphate to the GPI second mannose. This Candida albicans (strain SC5314 / ATCC MYA-2876) (Yeast) protein is GPI ethanolamine phosphate transferase 2 (GPI7).